The primary structure comprises 100 residues: MSSPSAPLATPDVELDVHTLSSENLPWLCIVWDDPVNLMSYVTYVFQTVLGFSKKRATELMMQVHTEGKAVVSSGEKDKVEGDVKKLHTAGLWATMQQAG.

This sequence belongs to the ClpS family. Binds to the N-terminal domain of the chaperone ClpA.

Functionally, involved in the modulation of the specificity of the ClpAP-mediated ATP-dependent protein degradation. The protein is ATP-dependent Clp protease adapter protein ClpS of Corynebacterium glutamicum (strain R).